The primary structure comprises 139 residues: NADPH-dependent 7-cyano-7-deazaguanine reductase (139 aa).

Cys34 acts as the Thioimide intermediate in catalysis. Asp41 acts as the Proton donor in catalysis. Substrate contacts are provided by residues 56–58 and 75–76; these read IEL and HE.

The protein belongs to the GTP cyclohydrolase I family. QueF type 1 subfamily.

It is found in the cytoplasm. It catalyses the reaction 7-aminomethyl-7-carbaguanine + 2 NADP(+) = 7-cyano-7-deazaguanine + 2 NADPH + 3 H(+). It participates in tRNA modification; tRNA-queuosine biosynthesis. In terms of biological role, catalyzes the NADPH-dependent reduction of 7-cyano-7-deazaguanine (preQ0) to 7-aminomethyl-7-deazaguanine (preQ1). The chain is NADPH-dependent 7-cyano-7-deazaguanine reductase from Nitrosomonas europaea (strain ATCC 19718 / CIP 103999 / KCTC 2705 / NBRC 14298).